We begin with the raw amino-acid sequence, 176 residues long: RNA pyrophosphohydrolase (176 aa).

A Nudix hydrolase domain is found at 6 to 149; it reads GYRPNVGIVI…KRDVYRRVMK (144 aa). The Nudix box signature appears at 38–59; the sequence is GGINPGESPEQAMYRELYEEVG.

The protein belongs to the Nudix hydrolase family. RppH subfamily. Requires a divalent metal cation as cofactor.

Functionally, accelerates the degradation of transcripts by removing pyrophosphate from the 5'-end of triphosphorylated RNA, leading to a more labile monophosphorylated state that can stimulate subsequent ribonuclease cleavage. The sequence is that of RNA pyrophosphohydrolase from Photorhabdus laumondii subsp. laumondii (strain DSM 15139 / CIP 105565 / TT01) (Photorhabdus luminescens subsp. laumondii).